Here is a 229-residue protein sequence, read N- to C-terminus: Nectarin-1 (229 aa).

The signal sequence occupies residues 1-32 (MAAFGIKSKIFQIMEMTILFLFAISIDRYCFA). Cys42 and Cys57 are disulfide-bonded. Residue Asn60 is glycosylated (N-linked (GlcNAc...) asparagine). The Cupin type-1 domain occupies 69–217 (FAISKPGATN…TFQINIEDVQ (149 aa)). The Mn(2+) site is built by His117, His119, Glu124, and His163.

It belongs to the germin family. In terms of assembly, monomer. In the absence of manganese, it forms tetrameric and pentameric forms which show superoxide dismutase activity. The cofactor is Mn(2+). Glycosylated.

The protein resides in the secreted. Its subcellular location is the extracellular space. It is found in the apoplast. The catalysed reaction is 2 superoxide + 2 H(+) = H2O2 + O2. Its function is as follows. May interact with bacterial adhesins thereby protecting the reproductive tissues from microbial attack. Has no oxalate oxidase activity. The sequence is that of Nectarin-1 (NEC1) from Nicotiana plumbaginifolia (Leadwort-leaved tobacco).